Reading from the N-terminus, the 226-residue chain is Ornithine decarboxylase antizyme (226 aa).

This sequence belongs to the ODC antizyme family. As to quaternary structure, interacts with ODC and thereby sterically blocks ODC homodimerization.

Its function is as follows. Ornithine decarboxylase (ODC) antizyme protein that negatively regulates ODC activity and intracellular polyamine biosynthesis in response to increased intracellular polyamine levels. Binds to ODC monomers, inhibiting the assembly of the functional ODC homodimer, and targets the monomers for ubiquitin-independent proteolytic destruction by the 26S proteasome. The chain is Ornithine decarboxylase antizyme (spa1) from Schizosaccharomyces japonicus (Fission yeast).